The chain runs to 294 residues: NAD kinase (294 aa).

The Proton acceptor role is filled by Asp74. NAD(+) is bound by residues 74–75 (DG), Lys79, 149–150 (NE), Asp179, 190–195 (TGYSLS), and Ala214.

Belongs to the NAD kinase family. The cofactor is a divalent metal cation.

It localises to the cytoplasm. The enzyme catalyses NAD(+) + ATP = ADP + NADP(+) + H(+). Its function is as follows. Involved in the regulation of the intracellular balance of NAD and NADP, and is a key enzyme in the biosynthesis of NADP. Catalyzes specifically the phosphorylation on 2'-hydroxyl of the adenosine moiety of NAD to yield NADP. This Christiangramia forsetii (strain DSM 17595 / CGMCC 1.15422 / KT0803) (Gramella forsetii) protein is NAD kinase.